The primary structure comprises 241 residues: tRNA (guanine-N(7)-)-methyltransferase (241 aa).

S-adenosyl-L-methionine-binding residues include G61, E84, R86, N117, A118, and L137. The active site involves D140. Residues P141–K149 form an alphaC helix region. Residues T215 and E217 each coordinate S-adenosyl-L-methionine. Residues T215 to R223 are alpha6 helix.

It belongs to the class I-like SAM-binding methyltransferase superfamily. TrmB family. As to quaternary structure, catalytic component of the METTL1-WDR4 complex, composed of mettl1 and wdr4.

The protein resides in the nucleus. The enzyme catalyses guanosine(46) in tRNA + S-adenosyl-L-methionine = N(7)-methylguanosine(46) in tRNA + S-adenosyl-L-homocysteine. It catalyses the reaction a guanosine in mRNA + S-adenosyl-L-methionine = an N(7)-methylguanosine in mRNA + S-adenosyl-L-homocysteine. The catalysed reaction is a guanosine in miRNA + S-adenosyl-L-methionine = an N(7)-methylguanosine in miRNA + S-adenosyl-L-homocysteine. The protein operates within tRNA modification; N(7)-methylguanine-tRNA biosynthesis. Functionally, catalytic component of METTL1-WDR4 methyltransferase complex that mediates the formation of N(7)-methylguanine in a subset of RNA species, such as tRNAs, mRNAs and microRNAs (miRNAs). Catalyzes the formation of N(7)-methylguanine at position 46 (m7G46) in a large subset of tRNAs that contain the 5'-RAGGU-3' motif within the variable loop. M7G46 interacts with C13-G22 in the D-loop to stabilize tRNA tertiary structure and protect tRNAs from decay. Also acts as a methyltransferase for a subset of internal N(7)-methylguanine in mRNAs. Internal N(7)-methylguanine methylation of mRNAs in response to stress promotes their relocalization to stress granules, thereby suppressing their translation. Also methylates a specific subset of miRNAs. This Danio rerio (Zebrafish) protein is tRNA (guanine-N(7)-)-methyltransferase (mettl1).